We begin with the raw amino-acid sequence, 163 residues long: IQSTSMDQGILTEDSMNSFIRTLIQAGIWKNKVPKQMARTKDGTQTTVKKSEAEADATASQDTRLGFQPIVSVDAELLRQQRRFSSPRVLLSENTPLEPPPLYLTEEPVALNRTSRRKREGKSHRGEYSVCDSESRWVTDKSSAVDIRGHQVTVLGEIRMGPS.

Positions 1-3 (IQS) are cleaved as a signal peptide. The propeptide occupies 4 to 119 (TSMDQGILTE…ALNRTSRRKR (116 aa)). Disordered stretches follow at residues 38–60 (ARTKDGTQTTVKKSEAEADATAS) and 90–131 (LLSE…YSVC). A glycan (N-linked (GlcNAc...) asparagine) is linked at N112.

The protein belongs to the NGF-beta family.

Its subcellular location is the secreted. Its function is as follows. Seems to promote the survival of visceral and proprioceptive sensory neurons. This Eunectes notaeus (Yellow anaconda) protein is Neurotrophin-3 (NTF3).